Consider the following 529-residue polypeptide: Bifunctional purine biosynthesis protein PurH (529 aa).

Residues 1–148 (MQQRRPIRRA…KNHKDVAIVV (148 aa)) enclose the MGS-like domain.

This sequence belongs to the PurH family.

The enzyme catalyses (6R)-10-formyltetrahydrofolate + 5-amino-1-(5-phospho-beta-D-ribosyl)imidazole-4-carboxamide = 5-formamido-1-(5-phospho-D-ribosyl)imidazole-4-carboxamide + (6S)-5,6,7,8-tetrahydrofolate. The catalysed reaction is IMP + H2O = 5-formamido-1-(5-phospho-D-ribosyl)imidazole-4-carboxamide. It participates in purine metabolism; IMP biosynthesis via de novo pathway; 5-formamido-1-(5-phospho-D-ribosyl)imidazole-4-carboxamide from 5-amino-1-(5-phospho-D-ribosyl)imidazole-4-carboxamide (10-formyl THF route): step 1/1. Its pathway is purine metabolism; IMP biosynthesis via de novo pathway; IMP from 5-formamido-1-(5-phospho-D-ribosyl)imidazole-4-carboxamide: step 1/1. The sequence is that of Bifunctional purine biosynthesis protein PurH from Yersinia pseudotuberculosis serotype O:1b (strain IP 31758).